We begin with the raw amino-acid sequence, 334 residues long: Oligopeptide transport ATP-binding protein OppF (334 aa).

The 254-residue stretch at 12 to 265 (LEIADLKVHF…PLHPYTKALM (254 aa)) folds into the ABC transporter domain. 57 to 64 (GESGCGKS) contacts ATP.

The protein belongs to the ABC transporter superfamily. In terms of assembly, the complex is composed of two ATP-binding proteins (OppD and OppF), two transmembrane proteins (OppB and OppC) and a solute-binding protein (OppA).

It localises to the cell inner membrane. The catalysed reaction is a [peptide](out) + ATP + H2O = a [peptide](in) + ADP + phosphate + H(+). It carries out the reaction L-alanyl-gamma-D-glutamyl-meso-2,6-diaminopimelate(out) + ATP + H2O = L-alanyl-gamma-D-glutamyl-meso-2,6-diaminopimelate(in) + ADP + phosphate + H(+). Functionally, part of the ABC transporter complex OppABCDF involved in the uptake of oligopeptides, including the cell wall murein tripeptide L-alanyl-gamma-D-glutamyl-meso-diaminopimelate. Probably responsible for energy coupling to the transport system. Plays an important nutritional role and is involved in the recycling of cell wall peptides. In Salmonella typhimurium (strain LT2 / SGSC1412 / ATCC 700720), this protein is Oligopeptide transport ATP-binding protein OppF.